The primary structure comprises 88 residues: UPF0298 protein BC_3932 (88 aa).

The protein belongs to the UPF0298 family.

The protein resides in the cytoplasm. The polypeptide is UPF0298 protein BC_3932 (Bacillus cereus (strain ATCC 14579 / DSM 31 / CCUG 7414 / JCM 2152 / NBRC 15305 / NCIMB 9373 / NCTC 2599 / NRRL B-3711)).